Consider the following 484-residue polypeptide: Probable glycine dehydrogenase (decarboxylating) subunit 2 (484 aa).

Lysine 264 carries the post-translational modification N6-(pyridoxal phosphate)lysine.

This sequence belongs to the GcvP family. C-terminal subunit subfamily. As to quaternary structure, the glycine cleavage system is composed of four proteins: P, T, L and H. In this organism, the P 'protein' is a heterodimer of two subunits. It depends on pyridoxal 5'-phosphate as a cofactor.

The enzyme catalyses N(6)-[(R)-lipoyl]-L-lysyl-[glycine-cleavage complex H protein] + glycine + H(+) = N(6)-[(R)-S(8)-aminomethyldihydrolipoyl]-L-lysyl-[glycine-cleavage complex H protein] + CO2. Functionally, the glycine cleavage system catalyzes the degradation of glycine. The P protein binds the alpha-amino group of glycine through its pyridoxal phosphate cofactor; CO(2) is released and the remaining methylamine moiety is then transferred to the lipoamide cofactor of the H protein. This chain is Probable glycine dehydrogenase (decarboxylating) subunit 2, found in Legionella pneumophila (strain Lens).